Reading from the N-terminus, the 181-residue chain is Transmembrane protein 47 (181 aa).

At Ala-2 the chain carries N-acetylalanine. The next 4 helical transmembrane spans lie at 21–41 (LVGLVCIFLALCLDLGAVLSP), 83–103 (ALLLGGAAIILIAFLVGLISI), 115–135 (VAVMLFAAVVLQVCSLVLYPI), and 152–172 (GYGLAWGATIFSFGGAILYCL).

The protein belongs to the TMEM47 family. In terms of assembly, interacts with CTNNB1, CTNNA1, PRKCI, PARD6B, FYB1. Expressed in adult brain, fetal brain, cerebellum, heart, lung, prostate and thyroid.

Its subcellular location is the membrane. It is found in the cell junction. It localises to the adherens junction. Functionally, regulates cell junction organization in epithelial cells. May play a role in the transition from adherens junction to tight junction assembly. May regulate F-actin polymerization required for tight junctional localization dynamics and affect the junctional localization of PARD6B. During podocyte differentiation may negatively regulate activity of FYN and subsequently the abundance of nephrin. This is Transmembrane protein 47 (TMEM47) from Homo sapiens (Human).